The primary structure comprises 600 residues: Ligand-dependent nuclear receptor corepressor-like protein (600 aa).

Disordered regions lie at residues 1–24, 102–122, and 495–519; these read MEKGTDRMAAAAPAPPAAASQCRS, SVIGSSQSTPTEELSSQGQSN, and DGTSENTEDSLDRKDNKQPRKKRGR. A compositionally biased stretch (polar residues) spans 104–122; it reads IGSSQSTPTEELSSQGQSN. Residues 514–566 enclose the HTH psq-type domain; that stretch reads RKKRGRYRQYDHEIMEEAIAMVMSGKMSVSKAQGIYGVPHSTLEYKVKERSGT. Residues 542–562 constitute a DNA-binding region (H-T-H motif); sequence VSKAQGIYGVPHSTLEYKVKE. Residues 581–600 are disordered; that stretch reads GLFNMTDSGTGSCKTSSKPV. The segment covering 583–600 has biased composition (polar residues); it reads FNMTDSGTGSCKTSSKPV.

The protein localises to the nucleus. May act as transcription activator that binds DNA elements with the sequence 5'-CCCTATCGATCGATCTCTACCT-3'. The sequence is that of Ligand-dependent nuclear receptor corepressor-like protein (LCORL) from Gallus gallus (Chicken).